We begin with the raw amino-acid sequence, 85 residues long: Small ribosomal subunit protein bS16c (85 aa).

Belongs to the bacterial ribosomal protein bS16 family.

The protein resides in the plastid. The protein localises to the chloroplast. This Nicotiana tabacum (Common tobacco) protein is Small ribosomal subunit protein bS16c.